The chain runs to 604 residues: NADPH oxidase activator (604 aa).

2 TPR repeats span residues Ser-36–Leu-69 and Ser-71–His-103. Disordered regions lie at residues Phe-180–Ser-298 and Asp-383–Val-581. Composition is skewed to low complexity over residues Ser-194–Ser-215 and Pro-225–Pro-243. The span at Lys-244 to Ser-260 shows a compositional bias: pro residues. Residues Ser-261–Leu-284 show a composition bias toward low complexity. Residues Lys-309–Ile-384 form the PB1 domain. Composition is skewed to low complexity over residues Pro-396–Ser-424, Pro-435–Thr-453, and Phe-467–Ser-483. Residues Leu-502 to Gln-528 are compositionally biased toward polar residues. Positions Ser-529–Ser-570 are enriched in low complexity. The region spanning Pro-573–Pro-604 is the WW domain.

Functionally, may function as an activator of NOX1, a superoxide-producing NADPH oxidase. The sequence is that of NADPH oxidase activator (ncfA) from Dictyostelium discoideum (Social amoeba).